We begin with the raw amino-acid sequence, 105 residues long: Large ribosomal subunit protein eL36 (105 aa).

Positions 9–31 (VGLNKGHKVTKNVSKPRHSRRRR) are disordered. A compositionally biased stretch (basic residues) spans 13 to 31 (KGHKVTKNVSKPRHSRRRR). Lysine 62 bears the N6-acetyllysine mark.

It belongs to the eukaryotic ribosomal protein eL36 family. As to quaternary structure, component of the large ribosomal subunit.

It is found in the cytoplasm. It localises to the cytosol. Functionally, component of the large ribosomal subunit. The ribosome is a large ribonucleoprotein complex responsible for the synthesis of proteins in the cell. The protein is Large ribosomal subunit protein eL36 (RPL36) of Oryctolagus cuniculus (Rabbit).